The primary structure comprises 518 residues: Probable high-affinity hexose transporter ght7 (518 aa).

The Cytoplasmic segment spans residues 1–27 (MRDFQSRFADRYNQITNSYSYSSSRQG). The helical transmembrane segment at 28–48 (LITGMVNVGSFFGCLLSSPVA) threads the bilayer. Topologically, residues 49 to 54 (DKIGKR) are extracellular. A helical membrane pass occupies residues 55–75 (LSIIVWTTVYLIGIIIQVTTV). Residues 76-77 (PS) are Cytoplasmic-facing. Residues 78-98 (WVQILVAKIWTGLSIGALSVI) form a helical membrane-spanning segment. Over 99–112 (TPGYQSEVAPAIMR) the chain is Extracellular. A helical membrane pass occupies residues 113 to 133 (GAIVTTYQLFITLGIFIAACI). The Cytoplasmic segment spans residues 134–149 (NMGTHKYSHGTTAQWR). The helical transmembrane segment at 150–170 (ISIGINLLWGIITLVGIIFLP) threads the bilayer. The Extracellular segment spans residues 171–236 (ESPRYLIAIG…IFNANIRYRT (66 aa)). A helical transmembrane segment spans residues 237–257 (FLGMAVMMFQQLTGANYYFYY). The Cytoplasmic portion of the chain corresponds to 258-271 (GTQVFRGTGMDSPY). The chain crosses the membrane as a helical span at residues 272–292 (LAALIPDAVNCGCTFGAIFVL). At 293 to 298 (EFFGRR) the chain is on the extracellular side. A helical transmembrane segment spans residues 299-319 (SPLIVGGIWQYICFFIYAAVG). Residues 320 to 333 (DRALYHKNGTSNHR) are Cytoplasmic-facing. The helical transmembrane segment at 334 to 354 (AGAVMIVFSCLFIFSFSQTWA) threads the bilayer. Residues 355–374 (PAAYVIVGESYPVRYRSKCA) lie on the Extracellular side of the membrane. Residues 375–395 (AVATSANWFWNFLISFFTPFI) form a helical membrane-spanning segment. The Cytoplasmic portion of the chain corresponds to 396–402 (TNSIGFK). Residues 403–423 (YGYIFASCNLTGAAIIFLFVH) traverse the membrane as a helical segment. The Extracellular portion of the chain corresponds to 424–518 (ETKGRTLEEI…IRPDKREPRL (95 aa)). The span at 477–506 (IENTDNQGDSGSFQTSTPDDSRPEQNQASA) shows a compositional bias: polar residues. The disordered stretch occupies residues 477–518 (IENTDNQGDSGSFQTSTPDDSRPEQNQASATYIRPDKREPRL).

The protein belongs to the major facilitator superfamily. Sugar transporter (TC 2.A.1.1) family.

It localises to the membrane. In Schizosaccharomyces pombe (strain 972 / ATCC 24843) (Fission yeast), this protein is Probable high-affinity hexose transporter ght7 (ght7).